The primary structure comprises 78 residues: Large ribosomal subunit protein bL28 (78 aa).

The protein belongs to the bacterial ribosomal protein bL28 family.

This is Large ribosomal subunit protein bL28 from Salmonella choleraesuis (strain SC-B67).